The following is a 505-amino-acid chain: Hexose transporter 1 (505 aa).

The Cytoplasmic portion of the chain corresponds to 1-27 (MNILRMDILSRGGTQEIEHRDGFFNTS). A helical membrane pass occupies residues 28-48 (FQYVLSACLASFIFGYQVSVL). The Extracellular segment spans residues 49–78 (NTIKSYIVVEFEWCSTKTDTSCEDSILKSS). C62 and C70 are disulfide-bonded. Residues 79 to 99 (FLLASVFIGAVLGSGFSGYLV) form a helical membrane-spanning segment. Topologically, residues 100-104 (KFGRR) are cytoplasmic. The chain crosses the membrane as a helical span at residues 105–125 (FSLMVIYIFFIFVSILTAISH). Residues 126–134 (HFHTILYAR) are Extracellular-facing. Residues 135-155 (LLSGFGIGLITVSVPMYISEM) traverse the membrane as a helical segment. Topologically, residues 156–165 (THKDKKGAYG) are cytoplasmic. The chain crosses the membrane as a helical span at residues 166-186 (VLHQLFITFGIFVAVLLGLFL). Q169 is an alpha-D-glucose binding site. Q169 contacts beta-D-glucose. At 187–208 (GDGPKINGKSIELSNFEMFWWR) the chain is on the extracellular side. The helical transmembrane segment at 209–229 (FMFFLPTIISLLGIILLIAFY) threads the bilayer. Residues 230-294 (KEETPYFLYE…SALKIPAYRN (65 aa)) lie on the Cytoplasmic side of the membrane. The helical transmembrane segment at 295–315 (VIILGCILSGFQQFTGINVLV) threads the bilayer. Alpha-D-glucose contacts are provided by Q306, Q307, and N312. A beta-D-glucose-binding site is contributed by Q306. N312 contacts beta-D-glucose. Over 316 to 332 (ANSNELYKEFLDKNLIT) the chain is Extracellular. Residues 333-353 (ILSVIMTAVNFLMTFPAIYII) form a helical membrane-spanning segment. Residue N342 participates in beta-D-glucose binding. Topologically, residues 354–358 (EKIGR) are cytoplasmic. Residues 359 to 379 (KTLLLGGCIGVICAFLPTVIA) traverse the membrane as a helical segment. The Extracellular portion of the chain corresponds to 380–393 (RQVWGPTKIVNGLS). A helical membrane pass occupies residues 394 to 414 (IAGTFLMIISFAVSYGPVLWI). W413 is a binding site for alpha-D-glucose. At 415–430 (YLHEMYPSEIKDSAAS) the chain is on the cytoplasmic side. The helical transmembrane segment at 431-451 (LASLINWVCAIIVVFPSDIII) threads the bilayer. The Extracellular segment spans residues 452 to 456 (KKSPS). A helical membrane pass occupies residues 457–477 (ILFMFFSVMCIIAFLFIMFFI). Topologically, residues 478 to 505 (KETKGGEIGTSPYISLEERQKHIGKSKV) are cytoplasmic.

Belongs to the major facilitator superfamily. Sugar transporter (TC 2.A.1.1) family. As to quaternary structure, homodimer.

It localises to the cell membrane. The enzyme catalyses D-glucose(out) = D-glucose(in). It catalyses the reaction D-fructose(out) = D-fructose(in). It carries out the reaction D-galactose(in) = D-galactose(out). The catalysed reaction is D-mannose(out) = D-mannose(in). The enzyme catalyses D-glucosamine(out) = D-glucosamine(in). It catalyses the reaction D-xylose(out) = D-xylose(in). Inhibited by cytochalasin B. Sodium-independent facilitative hexose transporter. Can transport D-glucose and D-fructose. Can transport D-mannose, D-galactose, D-xylose and D-glucosamine. This is Hexose transporter 1 from Plasmodium yoelii yoelii.